The sequence spans 530 residues: Phosphoenolpyruvate carboxykinase (ATP) (530 aa).

Residues Arg58, Tyr195, and Lys201 each contribute to the substrate site. ATP-binding positions include Lys201, His220, and 236-244 (GLSGTGKTT). Residues Lys201 and His220 each coordinate Mn(2+). Mn(2+) is bound at residue Asp257. Residues Glu285, Arg321, 440 to 441 (RI), and Thr446 contribute to the ATP site. Arg321 contacts substrate.

The protein belongs to the phosphoenolpyruvate carboxykinase (ATP) family. Mn(2+) serves as cofactor.

It localises to the cytoplasm. The enzyme catalyses oxaloacetate + ATP = phosphoenolpyruvate + ADP + CO2. The protein operates within carbohydrate biosynthesis; gluconeogenesis. Its function is as follows. Involved in the gluconeogenesis. Catalyzes the conversion of oxaloacetate (OAA) to phosphoenolpyruvate (PEP) through direct phosphoryl transfer between the nucleoside triphosphate and OAA. The polypeptide is Phosphoenolpyruvate carboxykinase (ATP) (Staphylococcus aureus (strain Mu3 / ATCC 700698)).